The sequence spans 3120 residues: DNA-directed RNA polymerase subunit beta'' (3120 aa).

Zn(2+) is bound by residues Cys323, Cys396, Cys403, and Cys406. Residues 595 to 1130 (FIGEGKQNVL…LKTLVLKKWF (536 aa)) are insert-1. An insert-2 region spans residues 1796 to 2346 (KGHLVAYARP…NGIIQAKSLL (551 aa)). Positions 2422-2610 (NSNFLENTHF…PEGEGEKDMT (189 aa)) are insert-3. Residues 2726–2801 (FSKKRWKKSI…KQNQTIILAL (76 aa)) are insert-4. An insert-5 region spans residues 2856-2996 (ASKMSEYMFS…LNQLLSNNLD (141 aa)). The segment at 2926-2956 (EGIDSSKIPSSNIPEGKVTQNNKRKSTRKNV) is disordered. Polar residues predominate over residues 2932–2946 (KIPSSNIPEGKVTQN).

The protein belongs to the RNA polymerase beta' chain family. RpoC2 subfamily. In terms of assembly, in plastids the minimal PEP RNA polymerase catalytic core is composed of four subunits: alpha, beta, beta', and beta''. When a (nuclear-encoded) sigma factor is associated with the core the holoenzyme is formed, which can initiate transcription. It depends on Zn(2+) as a cofactor.

The protein resides in the plastid. Its subcellular location is the chloroplast. The catalysed reaction is RNA(n) + a ribonucleoside 5'-triphosphate = RNA(n+1) + diphosphate. In terms of biological role, DNA-dependent RNA polymerase catalyzes the transcription of DNA into RNA using the four ribonucleoside triphosphates as substrates. In Chlamydomonas reinhardtii (Chlamydomonas smithii), this protein is DNA-directed RNA polymerase subunit beta''.